The sequence spans 173 residues: 3-hydroxydecanoyl-[acyl-carrier-protein] dehydratase (173 aa).

Histidine 71 is a catalytic residue.

The protein belongs to the thioester dehydratase family. FabA subfamily. As to quaternary structure, homodimer.

The protein localises to the cytoplasm. The enzyme catalyses a (3R)-hydroxyacyl-[ACP] = a (2E)-enoyl-[ACP] + H2O. It catalyses the reaction (3R)-hydroxydecanoyl-[ACP] = (2E)-decenoyl-[ACP] + H2O. It carries out the reaction (2E)-decenoyl-[ACP] = (3Z)-decenoyl-[ACP]. It participates in lipid metabolism; fatty acid biosynthesis. Its function is as follows. Necessary for the introduction of cis unsaturation into fatty acids. Catalyzes the dehydration of (3R)-3-hydroxydecanoyl-ACP to E-(2)-decenoyl-ACP and then its isomerization to Z-(3)-decenoyl-ACP. Can catalyze the dehydratase reaction for beta-hydroxyacyl-ACPs with saturated chain lengths up to 16:0, being most active on intermediate chain length. The protein is 3-hydroxydecanoyl-[acyl-carrier-protein] dehydratase of Baumannia cicadellinicola subsp. Homalodisca coagulata.